The primary structure comprises 433 residues: Histone acetyltransferase type B subunit 2 (433 aa).

WD repeat units follow at residues 134 to 174 (NHDG…NTPS), 187 to 227 (GQHK…KPNN), 237 to 277 (GHTA…SAPK), 282 to 322 (AHTG…VKLH), and 326 to 366 (SHTD…QEQT). Positions 368-372 (DDAED) are interaction with the histone H4 N-terminus. Residues 383–433 (GHTSRPTDLAWSPHMEWALTSAAEDNIVMVWRPSKAVIDTGNEELTPDDLE) form a WD 6 repeat.

The protein belongs to the WD repeat RBAP46/RBAP48/MSI1 family. Component of the HAT-B complex composed of at least HAT1 and HAT2. The HAT-B complex binds to histone H4 tail.

Its subcellular location is the cytoplasm. It is found in the nucleus. Its function is as follows. Regulatory subunit of the histone acetylase B (HAT-B) complex. The complex acetylates 'Lys-12' of histone H4 which is required for telomeric silencing. This chain is Histone acetyltransferase type B subunit 2 (HAT2), found in Mycosarcoma maydis (Corn smut fungus).